We begin with the raw amino-acid sequence, 171 residues long: Adenine phosphoribosyltransferase (171 aa).

The protein belongs to the purine/pyrimidine phosphoribosyltransferase family. In terms of assembly, homodimer.

It is found in the cytoplasm. It carries out the reaction AMP + diphosphate = 5-phospho-alpha-D-ribose 1-diphosphate + adenine. It functions in the pathway purine metabolism; AMP biosynthesis via salvage pathway; AMP from adenine: step 1/1. In terms of biological role, catalyzes a salvage reaction resulting in the formation of AMP, that is energically less costly than de novo synthesis. The protein is Adenine phosphoribosyltransferase of Natranaerobius thermophilus (strain ATCC BAA-1301 / DSM 18059 / JW/NM-WN-LF).